We begin with the raw amino-acid sequence, 143 residues long: UPF0201 protein Pars_1985 (143 aa).

It belongs to the UPF0201 family.

This is UPF0201 protein Pars_1985 from Pyrobaculum arsenaticum (strain DSM 13514 / JCM 11321 / PZ6).